A 196-amino-acid chain; its full sequence is Large ribosomal subunit protein bL9 (196 aa).

The protein belongs to the bacterial ribosomal protein bL9 family.

Functionally, binds to the 23S rRNA. In Gluconobacter oxydans (strain 621H) (Gluconobacter suboxydans), this protein is Large ribosomal subunit protein bL9.